A 66-amino-acid polypeptide reads, in one-letter code: FMRFamide-like neuropeptides 24 (66 aa).

The signal sequence occupies residues 1-22; the sequence is MSRTSIILVLAIFVAIAAIAQC. The propeptide occupies 23 to 48; sequence RNIQYDVDEISPEAAFRYAQWGEIPH. Phe-61 bears the Phenylalanine amide mark. Residues 65–66 constitute a propeptide that is removed on maturation; it reads SV.

It belongs to the FARP (FMRFamide related peptide) family.

The protein resides in the secreted. Its function is as follows. FMRFamides and FMRFamide-like peptides are neuropeptides. The polypeptide is FMRFamide-like neuropeptides 24 (Caenorhabditis briggsae).